We begin with the raw amino-acid sequence, 390 residues long: Mannitol-1-phosphate 5-dehydrogenase (390 aa).

Ala7 to Gly18 contacts NAD(+). Residue Lys216 is part of the active site.

This sequence belongs to the mannitol dehydrogenase family. In terms of assembly, monomer.

The catalysed reaction is D-mannitol 1-phosphate + NAD(+) = beta-D-fructose 6-phosphate + NADH + H(+). In terms of biological role, catalyzes the NAD(H)-dependent interconversion of D-fructose 6-phosphate and D-mannitol 1-phosphate in the mannitol metabolic pathway. Has a strong preference for NADH over NADPH. This Alternaria alternata (Alternaria rot fungus) protein is Mannitol-1-phosphate 5-dehydrogenase.